The sequence spans 366 residues: Actin-like protein 8 (366 aa).

Belongs to the actin family. As to expression, strongly expressed in testis and pancreas. Weak expression in placenta.

It is found in the cytoplasm. The protein localises to the cytoskeleton. This Homo sapiens (Human) protein is Actin-like protein 8 (ACTL8).